Consider the following 599-residue polypeptide: Chaperone protein DnaK (599 aa).

A Phosphothreonine; by autocatalysis modification is found at Thr-187. Residues Ala-575 to Asn-599 are disordered.

It belongs to the heat shock protein 70 family.

Functionally, acts as a chaperone. The protein is Chaperone protein DnaK of Mycoplasmopsis pulmonis (strain UAB CTIP) (Mycoplasma pulmonis).